The chain runs to 407 residues: L-cysteine:1D-myo-inositol 2-amino-2-deoxy-alpha-D-glucopyranoside ligase (407 aa).

Residue Cys-43 coordinates Zn(2+). Residues 43–46 (CGIT), Thr-58, and 81–83 (NAT) each bind L-cysteinyl-5'-AMP. Residues 45–55 (ITPYDATHLGH) carry the 'HIGH' region motif. A 'ERGGDP' region motif is present at residues 183-188 (QRGGDP). Position 223 (Trp-223) interacts with L-cysteinyl-5'-AMP. Residue Cys-227 participates in Zn(2+) binding. 245–247 (GSD) lines the L-cysteinyl-5'-AMP pocket. Position 252 (His-252) interacts with Zn(2+). L-cysteinyl-5'-AMP is bound at residue Val-279. Residues 285 to 289 (KMSKS) carry the 'KMSKS' region motif.

It belongs to the class-I aminoacyl-tRNA synthetase family. MshC subfamily. Monomer. The cofactor is Zn(2+).

The enzyme catalyses 1D-myo-inositol 2-amino-2-deoxy-alpha-D-glucopyranoside + L-cysteine + ATP = 1D-myo-inositol 2-(L-cysteinylamino)-2-deoxy-alpha-D-glucopyranoside + AMP + diphosphate + H(+). Its function is as follows. Catalyzes the ATP-dependent condensation of GlcN-Ins and L-cysteine to form L-Cys-GlcN-Ins. The chain is L-cysteine:1D-myo-inositol 2-amino-2-deoxy-alpha-D-glucopyranoside ligase from Streptosporangium roseum (strain ATCC 12428 / DSM 43021 / JCM 3005 / KCTC 9067 / NCIMB 10171 / NRRL 2505 / NI 9100).